The sequence spans 225 residues: Large ribosomal subunit protein bL25 (225 aa).

The disordered stretch occupies residues 206-225 (EDSKNKITKDNETNKDKSNL).

Belongs to the bacterial ribosomal protein bL25 family. CTC subfamily. Part of the 50S ribosomal subunit; part of the 5S rRNA/L5/L18/L25 subcomplex. Contacts the 5S rRNA. Binds to the 5S rRNA independently of L5 and L18.

This is one of the proteins that binds to the 5S RNA in the ribosome where it forms part of the central protuberance. The chain is Large ribosomal subunit protein bL25 from Vesicomyosocius okutanii subsp. Calyptogena okutanii (strain HA).